The chain runs to 164 residues: Phosphopantetheine adenylyltransferase (164 aa).

Ser-9 lines the substrate pocket. Residues 9–10 (SF) and His-17 each bind ATP. Substrate-binding residues include Lys-41, Val-78, and Arg-92. ATP contacts are provided by residues 93-95 (GLR), Glu-103, and 128-134 (SRPITAT).

It belongs to the bacterial CoaD family. Homohexamer. Mg(2+) is required as a cofactor.

The protein localises to the cytoplasm. The catalysed reaction is (R)-4'-phosphopantetheine + ATP + H(+) = 3'-dephospho-CoA + diphosphate. It participates in cofactor biosynthesis; coenzyme A biosynthesis; CoA from (R)-pantothenate: step 4/5. Reversibly transfers an adenylyl group from ATP to 4'-phosphopantetheine, yielding dephospho-CoA (dPCoA) and pyrophosphate. This is Phosphopantetheine adenylyltransferase from Agrobacterium fabrum (strain C58 / ATCC 33970) (Agrobacterium tumefaciens (strain C58)).